The sequence spans 714 residues: Cell wall protein IFF7 (714 aa).

An N-terminal signal peptide occupies residues 1-19 (MLFTLSILSTLLFSTSISA). The N-linked (GlcNAc...) asparagine glycan is linked to asparagine 200. The span at 320–330 (GPVPSQKSLPS) shows a compositional bias: polar residues. Disordered regions lie at residues 320–633 (GPVP…AADS) and 660–692 (PIAN…ANGS). Positions 346 to 504 (GSSSSSSVVS…SSTPLSGDSS (159 aa)) are enriched in low complexity. N-linked (GlcNAc...) asparagine glycosylation is found at asparagine 390, asparagine 394, asparagine 399, asparagine 421, and asparagine 473. Residues 505–519 (QVSSLTTGTSPDTIA) show a composition bias toward polar residues. Residues 520–544 (SFQTDSTSFGFGSGSPSSGAVQSSG) are compositionally biased toward low complexity. The span at 545-558 (VTNSTPNTGDVNTQ) shows a compositional bias: polar residues. 2 stretches are compositionally biased toward low complexity: residues 559 to 590 (SNTA…TTTG) and 597 to 625 (NNNN…NTNN). Residues asparagine 577, asparagine 621, asparagine 624, and asparagine 663 are each glycosylated (N-linked (GlcNAc...) asparagine). A compositionally biased stretch (low complexity) spans 665–679 (SSSPSSSSSSSSSSS). A glycan (N-linked (GlcNAc...) asparagine) is linked at asparagine 690. The GPI-anchor amidated asparagine moiety is linked to residue asparagine 690. A propeptide spans 691–714 (GSSKLSIGMTFMISGFATMFALFM) (removed in mature form).

It belongs to the HYR1/IFF family. In terms of processing, the GPI-anchor is attached to the protein in the endoplasmic reticulum and serves to target the protein to the cell surface. There, the glucosamine-inositol phospholipid moiety is cleaved off and the GPI-modified mannoprotein is covalently attached via its lipidless GPI glycan remnant to the 1,6-beta-glucan of the outer cell wall layer.

The protein resides in the secreted. Its subcellular location is the cell wall. It localises to the membrane. In terms of biological role, GPI-anchored cell wall protein involved in cell wall organization, hyphal growth, as well as in host-fungal interaction and virulence. The chain is Cell wall protein IFF7 (IFF8) from Candida albicans (strain SC5314 / ATCC MYA-2876) (Yeast).